The primary structure comprises 278 residues: Methyltransferase GfsG (278 aa).

Residues Gln-105 and 128 to 129 (DA) contribute to the S-adenosyl-L-methionine site. Glu-146 (proton acceptor) is an active-site residue. An S-adenosyl-L-methionine-binding site is contributed by His-150.

The protein belongs to the methyltransferase superfamily.

It participates in antibiotic biosynthesis. In terms of biological role, methylase required for synthesis of the 16-membered macrolide antibiotics FD-891 and FD-892. In vitro uses S-adenosyl-L-methionine to methylate a number of biosynthetic intermediates in the synthesis of FD-891. The sequence is that of Methyltransferase GfsG from Streptomyces halstedii.